The sequence spans 424 residues: Enolase (424 aa).

Glutamine 162 lines the (2R)-2-phosphoglycerate pocket. Catalysis depends on glutamate 204, which acts as the Proton donor. 3 residues coordinate Mg(2+): aspartate 241, glutamate 284, and aspartate 311. 4 residues coordinate (2R)-2-phosphoglycerate: lysine 336, arginine 365, serine 366, and lysine 387. The active-site Proton acceptor is the lysine 336.

It belongs to the enolase family. Mg(2+) serves as cofactor.

It is found in the cytoplasm. The protein resides in the secreted. The protein localises to the cell surface. The catalysed reaction is (2R)-2-phosphoglycerate = phosphoenolpyruvate + H2O. The protein operates within carbohydrate degradation; glycolysis; pyruvate from D-glyceraldehyde 3-phosphate: step 4/5. Its function is as follows. Catalyzes the reversible conversion of 2-phosphoglycerate (2-PG) into phosphoenolpyruvate (PEP). It is essential for the degradation of carbohydrates via glycolysis. The sequence is that of Enolase from Chelativorans sp. (strain BNC1).